A 535-amino-acid chain; its full sequence is Dual specificity calcium/calmodulin-dependent 3',5'-cyclic nucleotide phosphodiesterase 1B (535 aa).

The interval Met1 to Glu21 is disordered. 2 positions are modified to phosphoserine: Ser7 and Ser14. 2 calmodulin-binding regions span residues Ser27 to Asn47 and Glu117 to Arg140. The PDEase domain occupies Val145 to Gly502. His222 serves as the catalytic Proton donor. Zn(2+) contacts are provided by His226, His262, Asp263, and Asp369. Residue Asp263 coordinates Mg(2+). Disordered regions lie at residues Pro445–Asn474 and Trp495–Asp535. Positions Lys454–Gln463 are enriched in polar residues. Residues Ser465 and Ser513 each carry the phosphoserine modification.

This sequence belongs to the cyclic nucleotide phosphodiesterase family. PDE1 subfamily. As to quaternary structure, homodimer. Zn(2+) serves as cofactor. It depends on Mg(2+) as a cofactor. As to expression, expressed in brain.

The protein resides in the cytoplasm. It is found in the cytosol. It catalyses the reaction a nucleoside 3',5'-cyclic phosphate + H2O = a nucleoside 5'-phosphate + H(+). It carries out the reaction 3',5'-cyclic GMP + H2O = GMP + H(+). The catalysed reaction is 3',5'-cyclic AMP + H2O = AMP + H(+). Its activity is regulated as follows. Type I PDE are activated by the binding of calmodulin in the presence of Ca(2+). Its function is as follows. Cyclic nucleotide phosphodiesterase with a dual specificity for the second messengers cAMP and cGMP, which are key regulators of many important physiological processes. Has a preference for cGMP as a substrate. The protein is Dual specificity calcium/calmodulin-dependent 3',5'-cyclic nucleotide phosphodiesterase 1B of Rattus norvegicus (Rat).